Consider the following 261-residue polypeptide: tRNA (guanine-N(7)-)-methyltransferase (261 aa).

S-adenosyl-L-methionine contacts are provided by Glu-75, Glu-100, Asp-127, and Asp-150. Asp-150 is a catalytic residue. Lys-154 serves as a coordination point for substrate. An interaction with RNA region spans residues 156-161; the sequence is RHNKRR. Residues Asp-186 and 223-226 contribute to the substrate site; that span reads THFE.

It belongs to the class I-like SAM-binding methyltransferase superfamily. TrmB family.

It carries out the reaction guanosine(46) in tRNA + S-adenosyl-L-methionine = N(7)-methylguanosine(46) in tRNA + S-adenosyl-L-homocysteine. It participates in tRNA modification; N(7)-methylguanine-tRNA biosynthesis. Functionally, catalyzes the formation of N(7)-methylguanine at position 46 (m7G46) in tRNA. The polypeptide is tRNA (guanine-N(7)-)-methyltransferase (Xanthomonas campestris pv. campestris (strain 8004)).